We begin with the raw amino-acid sequence, 140 residues long: Small ribosomal subunit protein uS19 (140 aa).

The protein belongs to the universal ribosomal protein uS19 family.

Functionally, protein S19 forms a complex with S13 that binds strongly to the 16S ribosomal RNA. This is Small ribosomal subunit protein uS19 from Methanocella arvoryzae (strain DSM 22066 / NBRC 105507 / MRE50).